We begin with the raw amino-acid sequence, 290 residues long: 4-hydroxy-3-methylbut-2-enyl diphosphate reductase (290 aa).

Cys12 contacts [4Fe-4S] cluster. The (2E)-4-hydroxy-3-methylbut-2-enyl diphosphate site is built by His50 and His83. 2 residues coordinate dimethylallyl diphosphate: His50 and His83. Residues His50 and His83 each coordinate isopentenyl diphosphate. Residue Cys105 coordinates [4Fe-4S] cluster. A (2E)-4-hydroxy-3-methylbut-2-enyl diphosphate-binding site is contributed by His133. His133 serves as a coordination point for dimethylallyl diphosphate. His133 contacts isopentenyl diphosphate. The active-site Proton donor is Glu135. Thr173 provides a ligand contact to (2E)-4-hydroxy-3-methylbut-2-enyl diphosphate. Cys202 is a binding site for [4Fe-4S] cluster. (2E)-4-hydroxy-3-methylbut-2-enyl diphosphate is bound by residues Ser230, Asn232, and Ser274. Dimethylallyl diphosphate is bound by residues Ser230, Asn232, and Ser274. Residues Ser230, Asn232, and Ser274 each coordinate isopentenyl diphosphate.

It belongs to the IspH family. Requires [4Fe-4S] cluster as cofactor.

It carries out the reaction isopentenyl diphosphate + 2 oxidized [2Fe-2S]-[ferredoxin] + H2O = (2E)-4-hydroxy-3-methylbut-2-enyl diphosphate + 2 reduced [2Fe-2S]-[ferredoxin] + 2 H(+). The catalysed reaction is dimethylallyl diphosphate + 2 oxidized [2Fe-2S]-[ferredoxin] + H2O = (2E)-4-hydroxy-3-methylbut-2-enyl diphosphate + 2 reduced [2Fe-2S]-[ferredoxin] + 2 H(+). It participates in isoprenoid biosynthesis; dimethylallyl diphosphate biosynthesis; dimethylallyl diphosphate from (2E)-4-hydroxy-3-methylbutenyl diphosphate: step 1/1. The protein operates within isoprenoid biosynthesis; isopentenyl diphosphate biosynthesis via DXP pathway; isopentenyl diphosphate from 1-deoxy-D-xylulose 5-phosphate: step 6/6. Functionally, catalyzes the conversion of 1-hydroxy-2-methyl-2-(E)-butenyl 4-diphosphate (HMBPP) into a mixture of isopentenyl diphosphate (IPP) and dimethylallyl diphosphate (DMAPP). Acts in the terminal step of the DOXP/MEP pathway for isoprenoid precursor biosynthesis. The polypeptide is 4-hydroxy-3-methylbut-2-enyl diphosphate reductase (Nitratidesulfovibrio vulgaris (strain ATCC 29579 / DSM 644 / CCUG 34227 / NCIMB 8303 / VKM B-1760 / Hildenborough) (Desulfovibrio vulgaris)).